The chain runs to 383 residues: Putative glutamate--cysteine ligase 2-1 (383 aa).

This sequence belongs to the glutamate--cysteine ligase type 2 family. YbdK subfamily.

The enzyme catalyses L-cysteine + L-glutamate + ATP = gamma-L-glutamyl-L-cysteine + ADP + phosphate + H(+). Functionally, ATP-dependent carboxylate-amine ligase which exhibits weak glutamate--cysteine ligase activity. The sequence is that of Putative glutamate--cysteine ligase 2-1 from Legionella pneumophila (strain Corby).